The following is a 637-amino-acid chain: MNTGIIDLFDNHVDSIPTILPHQLATLDYLVRTIIDENRSVLLFHIMGSGKTIIALLFALIASRFKKVHILVPNINILKIFNYNMGVAMNLFNDEFIAENIFIHSTTSFYSLNYNDNVINYNGLSRYNNSIFIVDKAHNIFGNNTGELMTVIKNKNKIPFLLLSGSPITNTPNTLGHIIDLMSEETIDFGEIISRGKKVIQTLLNERGVNVLKDLLKGRISYYEMPDKDLPTIRYHGRKFLDTRVVYCHMSKLQERDYMITRRQLCYHEMFDKNMYNVSMAVLGQLNLMNNLDTLFQEQDKELYPNLKINNGVLYGEELVTLNISSKFKYFINRIQTLNGKHFIYFSNSTYGGLVIKYIMLSNGYSEYNGSQGTNPHMINGKPKTFAIVTSKMKSSLEDLLDVYNSPENDDGSQLMFLFSSNIMSESYTLKEVRHIWFMTIPDTFSQYNQILGRSIRKFSYVDISEPVNVYLLAAVYSDFNDEVTSLNDYTQDELINVLPFDIKKLLYLKFKTKETNRIYSILQEMSETYSLPPHPSIVKVLLGELVRQFFYNNSRIKYNDAKLLKMVTSVIKNKEDARNYIDDIVNGHFFVSNKVFDKSLLYKYENDIITVPFRLSYEPFVWGVNFRKEYNVVSSP.

Residues 32 to 185 (RTIIDENRSV…GHIIDLMSEE (154 aa)) form the Helicase ATP-binding domain. 45–52 (HIMGSGKT) is an ATP binding site. Residues 135 to 138 (DKAH) carry the DEXH box motif. The Helicase C-terminal domain occupies 327 to 507 (KFKYFINRIQ…VLPFDIKKLL (181 aa)).

This sequence belongs to the helicase family. VETF subfamily. In terms of assembly, heterodimer of a 70 kDa and a 82 kDa subunit. Part of the early transcription complex composed of ETF, RAP94/OPG109, and the DNA-directed RNA polymerase.

It is found in the virion. Functionally, acts with RNA polymerase to initiate transcription from early gene promoters. Is recruited by the RPO-associated protein of 94 kDa RAP94/OPG109 to form the early transcription complex, which also contains the core RNA polymerase. ETF heterodimer binds to early gene promoters. This chain is Early transcription factor 70 kDa subunit (OPG118), found in Homo sapiens (Human).